We begin with the raw amino-acid sequence, 209 residues long: ATP synthase subunit b 2 (209 aa).

A helical membrane pass occupies residues 9–29 (WWGWVTLSVLVMVAGDGTLAF).

This sequence belongs to the ATPase B chain family. F-type ATPases have 2 components, F(1) - the catalytic core - and F(0) - the membrane proton channel. F(1) has five subunits: alpha(3), beta(3), gamma(1), delta(1), epsilon(1). F(0) has three main subunits: a(1), b(2) and c(10-14). The alpha and beta chains form an alternating ring which encloses part of the gamma chain. F(1) is attached to F(0) by a central stalk formed by the gamma and epsilon chains, while a peripheral stalk is formed by the delta and b chains.

It localises to the cell inner membrane. In terms of biological role, f(1)F(0) ATP synthase produces ATP from ADP in the presence of a proton or sodium gradient. F-type ATPases consist of two structural domains, F(1) containing the extramembraneous catalytic core and F(0) containing the membrane proton channel, linked together by a central stalk and a peripheral stalk. During catalysis, ATP synthesis in the catalytic domain of F(1) is coupled via a rotary mechanism of the central stalk subunits to proton translocation. Component of the F(0) channel, it forms part of the peripheral stalk, linking F(1) to F(0). The sequence is that of ATP synthase subunit b 2 from Desulfosudis oleivorans (strain DSM 6200 / JCM 39069 / Hxd3) (Desulfococcus oleovorans).